We begin with the raw amino-acid sequence, 254 residues long: Gamma-glutamyl-gamma-aminobutyrate hydrolase PuuD (254 aa).

In terms of domain architecture, Glutamine amidotransferase type-1 spans 16–250 (RNRLKGHATQ…ITACQHHIAE (235 aa)). C114 serves as the catalytic Nucleophile. Residues H222 and E224 contribute to the active site.

The protein belongs to the peptidase C26 family. In terms of assembly, homodimer.

It catalyses the reaction 4-(gamma-L-glutamylamino)butanoate + H2O = 4-aminobutanoate + L-glutamate. The protein operates within amine and polyamine degradation; putrescine degradation; 4-aminobutanoate from putrescine: step 4/4. Functionally, involved in the breakdown of putrescine via hydrolysis of the gamma-glutamyl linkage of gamma-glutamyl-gamma-aminobutyrate. This chain is Gamma-glutamyl-gamma-aminobutyrate hydrolase PuuD (puuD), found in Escherichia coli (strain K12).